Reading from the N-terminus, the 815-residue chain is Leucine--tRNA ligase (815 aa).

A 'HIGH' region motif is present at residues 40–50; the sequence is PYPSGRIHMGH. Residues 583–587 carry the 'KMSKS' region motif; sequence KMSKS. An ATP-binding site is contributed by lysine 586.

It belongs to the class-I aminoacyl-tRNA synthetase family.

The protein resides in the cytoplasm. The catalysed reaction is tRNA(Leu) + L-leucine + ATP = L-leucyl-tRNA(Leu) + AMP + diphosphate. The sequence is that of Leucine--tRNA ligase from Nitratiruptor sp. (strain SB155-2).